Here is a 113-residue protein sequence, read N- to C-terminus: Mitochondrial import protein 1 (113 aa).

The chain crosses the membrane as a helical span at residues 39–62; that stretch reads LVSFVGSCSINLLLPFLNGMMLGF.

Belongs to the MIM1 family. As to quaternary structure, component of the MIM complex containing at least MIM1 and MIM2. Interacts with MIM2; interaction is direct. Interacts with TOM70.

It is found in the mitochondrion outer membrane. Its function is as follows. Component of the MIM complex required for mitochondrial outer membrane protein import. The MIM complex cooperates with the receptor TOM70 in binding of precursor proteins and promotes their insertion and assembly into the outer membrane. Involved in import of the subset of proteins with multiple alpha-helical transmembrane segments, including UGO1. Required for the assembly of the TOM (translocase of outer membrane) receptor complex, which is responsible for the recognition and translocation of cytosolically synthesized mitochondrial preproteins. Required specifically for assembly of TOM40, TOM20, and TOM70, but not TOM22. The sequence is that of Mitochondrial import protein 1 (MIM1) from Saccharomyces cerevisiae (strain ATCC 204508 / S288c) (Baker's yeast).